Consider the following 97-residue polypeptide: ESAT-6-like protein EsxA (97 aa).

Belongs to the WXG100 family. ESAT-6 subfamily. Forms a tight 1:1 complex with EsxB. Forms a complex with EccC and EsxB, probably wholly mediated by EsxB.

It localises to the secreted. Functionally, may help regulate assembly and function of the type VII secretion system (T7SS). EsxA disassembles pre-formed EccC-EsxB multimers, possibly by making EccC-EsxA-EsxB trimers instead of EccC-EsxB-EsxB-EccC tetramers. The chain is ESAT-6-like protein EsxA from Thermomonospora curvata (strain ATCC 19995 / DSM 43183 / JCM 3096 / KCTC 9072 / NBRC 15933 / NCIMB 10081 / Henssen B9).